The sequence spans 436 residues: GTPase Obg (436 aa).

An Obg domain is found at 2-160; it reads SMFLDTAKIK…RELQLELKIL (159 aa). Positions 161–338 constitute an OBG-type G domain; the sequence is ADVGLVGFPS…LLDATAELLD (178 aa). Residues 167 to 174, 192 to 196, 214 to 217, 284 to 287, and 319 to 321 each bind GTP; these read GFPSVGKS, FTTIV, DLPG, NKMD, and SGL. Ser174 and Thr194 together coordinate Mg(2+). An OCT domain is found at 358–436; that stretch reads GFDEEEKAFE…IGKFEFEFVD (79 aa).

This sequence belongs to the TRAFAC class OBG-HflX-like GTPase superfamily. OBG GTPase family. As to quaternary structure, monomer. The cofactor is Mg(2+).

Its subcellular location is the cytoplasm. Functionally, an essential GTPase which binds GTP, GDP and possibly (p)ppGpp with moderate affinity, with high nucleotide exchange rates and a fairly low GTP hydrolysis rate. Plays a role in control of the cell cycle, stress response, ribosome biogenesis and in those bacteria that undergo differentiation, in morphogenesis control. This chain is GTPase Obg, found in Streptococcus pneumoniae (strain CGSP14).